The chain runs to 251 residues: Triosephosphate isomerase (251 aa).

9 to 11 (NWK) contacts substrate. His95 functions as the Electrophile in the catalytic mechanism. The active-site Proton acceptor is Glu167. Substrate contacts are provided by residues Gly173, Ser213, and 234-235 (GG).

This sequence belongs to the triosephosphate isomerase family. As to quaternary structure, homodimer.

It localises to the cytoplasm. It catalyses the reaction D-glyceraldehyde 3-phosphate = dihydroxyacetone phosphate. It functions in the pathway carbohydrate biosynthesis; gluconeogenesis. The protein operates within carbohydrate degradation; glycolysis; D-glyceraldehyde 3-phosphate from glycerone phosphate: step 1/1. Involved in the gluconeogenesis. Catalyzes stereospecifically the conversion of dihydroxyacetone phosphate (DHAP) to D-glyceraldehyde-3-phosphate (G3P). This is Triosephosphate isomerase from Lacticaseibacillus casei (strain BL23) (Lactobacillus casei).